Reading from the N-terminus, the 512-residue chain is Sucrose-6-phosphate hydrolase (512 aa).

Residues 40–43, Q59, W67, 102–103, 165–166, E229, and W311 contribute to the substrate site; these read WMND, FS, and RD. The active site involves D43.

It belongs to the glycosyl hydrolase 32 family.

Its subcellular location is the cytoplasm. The catalysed reaction is Hydrolysis of terminal non-reducing beta-D-fructofuranoside residues in beta-D-fructofuranosides.. It functions in the pathway glycan biosynthesis; sucrose metabolism. This Zymomonas mobilis subsp. mobilis (strain ATCC 10988 / DSM 424 / LMG 404 / NCIMB 8938 / NRRL B-806 / ZM1) protein is Sucrose-6-phosphate hydrolase (sacA).